The following is a 688-amino-acid chain: T-box transcription factor TBX2-A (688 aa).

Positions 104–277 (LWDQFHKIGT…NNPFAKGFRD (174 aa)) form a DNA-binding region, T-box. Disordered stretches follow at residues 301–436 (CKAD…GSLS) and 606–688 (PSTN…ETPK). Basic and acidic residues-rich tracts occupy residues 340-361 (NNRE…EIRS), 378-403 (RLED…KDGS), and 412-430 (SLEK…KSDP). Positions 621 to 636 (PGSESSKPGSSRESSP) are enriched in low complexity. A coiled-coil region spans residues 655–679 (ASMKDSINELQNIQRLVSGLESQRE). The span at 676–688 (SQREISPGRETPK) shows a compositional bias: basic and acidic residues.

As to quaternary structure, binds DNA as a monomer.

The protein localises to the nucleus. Functionally, transcription factor which acts as a transcriptional repressor. May also function as a transcriptional activator. Binds to the palindromic T site 5'-TTCACACCTAGGTGTGAA-3' DNA sequence, or a half-site, which are present in the regulatory region of several genes. In Xenopus laevis (African clawed frog), this protein is T-box transcription factor TBX2-A (tbx2-a).